Here is a 233-residue protein sequence, read N- to C-terminus: Bcl-2-like protein 1 (233 aa).

The short motif at 4–24 is the BH4 element; that stretch reads SNRELVVDFLSYKLSQKGYSW. The tract at residues 27-73 is disordered; that stretch reads FSDVEENRTEAPEETEAERETPSAINGNPSWHLADSPAVNGATGHSS. Ser-49 is modified (phosphoserine; by PLK3). Ser-62 carries the post-translational modification Phosphoserine; by CDK1. The BH3 signature appears at 86 to 100; it reads VKQALREAGDEFELR. A BH1 motif is present at residues 129–148; it reads ELFRDGVNWGRIVAFFSFGG. A BH2 motif is present at residues 180–195; the sequence is PWIQENGGWDTFVDLY. A helical transmembrane segment spans residues 210–226; the sequence is FNRWFLTGMTVAGVVLL.

Belongs to the Bcl-2 family. As to quaternary structure, homodimer. Interacts with BAD. Interacts with PGAM5. Interacts with HEBP2. Interacts with p53/TP53 and BBC3; interaction with BBC3 disrupts the interaction with p53/TP53. Interacts with ATP5F1A and ATP5F1B; the interactions mediate the association of isoform Bcl-X(L) with the mitochondrial membrane ATP synthase F(1)F(0) ATP synthase. Interacts with VDAC1. Interacts with BCL2L11 (via BH3). Interacts with RNF183. Interacts with GIMAP3/IAN4 and GIMAP5/IAN5. Interacts with GIMAP5 and HSPA8/HSC70; the interaction between HSPA8 and BCL2L1 is impaired in the absence of GIMAP5. Interacts with isoform 4 of CLU; this interaction releases and activates BAX and promotes cell death. In terms of assembly, forms heterodimers with BAX, BAK or BCL2; heterodimerization with BAX does not seem to be required for anti-apoptotic activity. Interacts with isoform 1 of SIVA1; the interaction inhibits the anti-apoptotic activity. Interacts with IKZF3. Interacts with RTL10/BOP. Interacts with DNM1L and CLTA; DNM1L and BCL2L1 isoform BCL-X(L) may form a complex in synaptic vesicles that also contains clathrin and MFF. Interacts (via the loop between motifs BH4 and BH3) with NLRP1 (via LRR repeats), but not with NLRP2, NLRP3, NLRP4, PYCARD, nor MEFV. Interacts with BECN1. Post-translationally, proteolytically cleaved by caspases during apoptosis. The cleaved protein, lacking the BH4 motif, has pro-apoptotic activity. In terms of processing, phosphorylated on Ser-62 by CDK1. This phosphorylation is partial in normal mitotic cells, but complete in G2-arrested cells upon DNA-damage, thus promoting subsequent apoptosis probably by triggering caspases-mediated proteolysis. Phosphorylated by PLK3, leading to regulate the G2 checkpoint and progression to cytokinesis during mitosis. Phosphorylation at Ser-49 appears during the S phase and G2, disappears rapidly in early mitosis during prometaphase, metaphase and early anaphase, and re-appears during telophase and cytokinesis. Ubiquitinated by RNF183 during prolonged ER stress, leading to degradation by the proteosome. Widely expressed, with highest levels in the brain, thymus, bone marrow, and kidney. Bcl-X(L) and Bcl-X(delta-TM) expression is enhanced in B- and T-lymphocytes that have been activated.

Its subcellular location is the mitochondrion membrane. The protein localises to the nucleus membrane. It localises to the cytoplasm. It is found in the cytoskeleton. The protein resides in the microtubule organizing center. Its subcellular location is the centrosome. The protein localises to the mitochondrion inner membrane. It localises to the mitochondrion outer membrane. It is found in the mitochondrion matrix. The protein resides in the cytoplasmic vesicle. Its subcellular location is the secretory vesicle. The protein localises to the synaptic vesicle membrane. It localises to the cytosol. Functionally, potent inhibitor of cell death. Inhibits activation of caspases. Appears to regulate cell death by blocking the voltage-dependent anion channel (VDAC) by binding to it and preventing the release of the caspase activator, CYC1, from the mitochondrial membrane. Also acts as a regulator of G2 checkpoint and progression to cytokinesis during mitosis. Its function is as follows. Isoform Bcl-X(L) also regulates presynaptic plasticity, including neurotransmitter release and recovery, number of axonal mitochondria as well as size and number of synaptic vesicle clusters. During synaptic stimulation, increases ATP availability from mitochondria through regulation of mitochondrial membrane ATP synthase F(1)F(0) activity and regulates endocytic vesicle retrieval in hippocampal neurons through association with DMN1L and stimulation of its GTPase activity in synaptic vesicles. May attenuate inflammation impairing NLRP1-inflammasome activation, hence CASP1 activation and IL1B release. Isoform Bcl-X(S) promotes apoptosis. The polypeptide is Bcl-2-like protein 1 (Bcl2l1) (Mus musculus (Mouse)).